A 180-amino-acid chain; its full sequence is ATP-dependent protease subunit HslV (180 aa).

T7 is a catalytic residue. G165, C168, and T171 together coordinate Na(+).

The protein belongs to the peptidase T1B family. HslV subfamily. As to quaternary structure, a double ring-shaped homohexamer of HslV is capped on each side by a ring-shaped HslU homohexamer. The assembly of the HslU/HslV complex is dependent on binding of ATP.

It localises to the cytoplasm. The catalysed reaction is ATP-dependent cleavage of peptide bonds with broad specificity.. With respect to regulation, allosterically activated by HslU binding. In terms of biological role, protease subunit of a proteasome-like degradation complex believed to be a general protein degrading machinery. This is ATP-dependent protease subunit HslV from Bacillus cereus (strain G9842).